The chain runs to 171 residues: MVVYDLLVSLSKESIDVLRFVEANLAAFNQQYIFFNIQRKNSITTPLLITPQQEKISQIVEFLMDEYNKNNRRPSGPPREQPMHPLLPYQQSSDEQPMMPYQQPPGNDDQPYEQIYHKKHASQQVNTELNDYYQHILALGDEDKGMDSMLKLPEKAKRGSDDEDDMFSIKN.

Disordered stretches follow at residues 68–112 (NKNN…DQPY) and 152–171 (LPEKAKRGSDDEDDMFSIKN). Residues 161-171 (DDEDDMFSIKN) show a composition bias toward acidic residues.

The protein belongs to the asfivirus H171R family.

It localises to the virion. This is an uncharacterized protein from African swine fever virus (strain Badajoz 1971 Vero-adapted) (Ba71V).